The following is a 643-amino-acid chain: Manganese lipoxygenase (643 aa).

The Lipoxygenase domain maps to 166-643 (WYTDEVFAQQ…PEQLANAIVI (478 aa)). 5 residues coordinate Mn(2+): His-325, His-330, His-510, Asn-514, and Ile-643.

This sequence belongs to the lipoxygenase family. Requires Mn(2+) as cofactor.

The catalysed reaction is (9Z,12Z)-octadecadienoate + O2 = (13S)-hydroperoxy-(9Z,11E)-octadecadienoate. Its function is as follows. Lipoxygenase that metabolizes linoleic and alpha-linolenic acids to 13S-hydroperoxy fatty acids. The protein is Manganese lipoxygenase of Pleurotus sapidus (Oyster mushroom).